The following is a 254-amino-acid chain: Probable glucose-1-phosphate cytidylyltransferase (254 aa).

Residues 6 to 10 (LCGGK), 11 to 13 (GTR), K23, T103, R108, and G126 contribute to the substrate site. D127 and D232 together coordinate Mg(2+).

This sequence belongs to the glucose-1-phosphate cytidylyltransferase family. Requires Mg(2+) as cofactor.

It catalyses the reaction alpha-D-glucose 1-phosphate + CTP + H(+) = CDP-D-glucose + diphosphate. Catalyzes the transfer of a CMP moiety from CTP to glucose 1-phosphate. In Bacillus subtilis (strain 168), this protein is Probable glucose-1-phosphate cytidylyltransferase (yfnH).